Consider the following 376-residue polypeptide: cAMP-dependent protein kinase type I regulatory subunit (376 aa).

The dimerization and phosphorylation stretch occupies residues 1–131; that stretch reads MSYMMAKTLE…ALSKAIAKNV (131 aa). Residues 72–93 are disordered; sequence PDDCEDLSPMPQTAAPPVRRRG. The Pseudophosphorylation motif motif lies at 91-95; that stretch reads RRGGI. Ser-96 carries the post-translational modification Phosphoserine. Residues 132–247, Glu-197, Arg-206, 250–371, Glu-321, and Arg-330 contribute to the 3',5'-cyclic AMP site; these read LFAH…FLSR and ILES…YNSF.

This sequence belongs to the cAMP-dependent kinase regulatory chain family. In terms of assembly, tetramer, composed of 2 regulatory (R) and 2 catalytic (C) subunits. In the presence of cAMP it dissociates into 2 active monomeric C subunits and an R dimer. Post-translationally, the pseudophosphorylation site binds to the substrate-binding region of the catalytic chain but is not phosphorylated. The physiological significance of phosphorylations by other kinases is unclear.

In Drosophila melanogaster (Fruit fly), this protein is cAMP-dependent protein kinase type I regulatory subunit (Pka-R1).